Here is a 385-residue protein sequence, read N- to C-terminus: Endoglucanase 1 (385 aa).

An N-terminal signal peptide occupies residues 1–17; sequence MKLVFSALASLLSGASA. Asn93 and Asn140 each carry an N-linked (GlcNAc...) asparagine glycan. The active-site Proton donor is Glu176. N-linked (GlcNAc...) asparagine glycosylation is found at Asn200 and Asn237. Residue Glu284 is the Nucleophile of the active site. Residues Asn289 and Asn331 are each glycosylated (N-linked (GlcNAc...) asparagine).

It belongs to the glycosyl hydrolase 5 (cellulase A) family.

The enzyme catalyses Endohydrolysis of (1-&gt;4)-beta-D-glucosidic linkages in cellulose, lichenin and cereal beta-D-glucans.. Its pathway is glycan metabolism; cellulose degradation. In terms of biological role, active towards carboxymethyl cellulose. This is Endoglucanase 1 (eg 1) from Robillarda sp. (strain Y-20).